The chain runs to 867 residues: Coiled-coil domain-containing protein 80 (867 aa).

The signal sequence occupies residues 1-18 (MRARYMLGFGVLCLLTWA). Disordered regions lie at residues 83–121 (RKVL…SSAG) and 282–539 (DSQV…GTLA). Polar residues predominate over residues 95-104 (GTRNPIQQDD). The segment covering 288 to 297 (PTERRKEIRK) has biased composition (basic and acidic residues). Residues 301–370 (RPTTTTTPAP…PRTTRANTTP (70 aa)) are compositionally biased toward low complexity. Residues 401–412 (ARYRDNHTSKKE) are compositionally biased toward basic and acidic residues. A compositionally biased stretch (basic residues) spans 426 to 435 (KPTKVRPTKK). Residues 436 to 451 (KNGDKDISNAYEEKYD) are compositionally biased toward basic and acidic residues. Residues 471-483 (KRGKGKTDKKKKK) show a composition bias toward basic residues. Basic and acidic residues-rich tracts occupy residues 484–504 (DKTD…DGKG) and 514–523 (KILEKEDYQK).

It belongs to the CCDC80 family. Binds to various extracellular matrix proteins.

It is found in the secreted. The protein resides in the extracellular space. The protein localises to the extracellular matrix. Functionally, promotes cell adhesion and matrix assembly. This chain is Coiled-coil domain-containing protein 80 (ccdc80), found in Danio rerio (Zebrafish).